A 154-amino-acid chain; its full sequence is Superoxide dismutase [Cu-Zn] (154 aa).

Positions 47, 49, and 64 each coordinate Cu cation. Cysteine 58 and cysteine 147 are disulfide-bonded. Positions 64, 72, 81, and 84 each coordinate Zn(2+). Histidine 121 lines the Cu cation pocket. A substrate-binding site is contributed by arginine 144.

This sequence belongs to the Cu-Zn superoxide dismutase family. As to quaternary structure, homodimer. Cu cation serves as cofactor. Requires Zn(2+) as cofactor.

It localises to the cytoplasm. It carries out the reaction 2 superoxide + 2 H(+) = H2O2 + O2. Destroys radicals which are normally produced within the cells and which are toxic to biological systems. The chain is Superoxide dismutase [Cu-Zn] (SOD1) from Claviceps purpurea (strain 20.1) (Ergot fungus).